The chain runs to 259 residues: Thiazole synthase (259 aa).

Lys-98 functions as the Schiff-base intermediate with DXP in the catalytic mechanism. 1-deoxy-D-xylulose 5-phosphate-binding positions include Gly-159, 185–186, and 207–208; these read AG and NS.

Belongs to the ThiG family. In terms of assembly, homotetramer. Forms heterodimers with either ThiH or ThiS.

Its subcellular location is the cytoplasm. It catalyses the reaction [ThiS sulfur-carrier protein]-C-terminal-Gly-aminoethanethioate + 2-iminoacetate + 1-deoxy-D-xylulose 5-phosphate = [ThiS sulfur-carrier protein]-C-terminal Gly-Gly + 2-[(2R,5Z)-2-carboxy-4-methylthiazol-5(2H)-ylidene]ethyl phosphate + 2 H2O + H(+). The protein operates within cofactor biosynthesis; thiamine diphosphate biosynthesis. Catalyzes the rearrangement of 1-deoxy-D-xylulose 5-phosphate (DXP) to produce the thiazole phosphate moiety of thiamine. Sulfur is provided by the thiocarboxylate moiety of the carrier protein ThiS. In vitro, sulfur can be provided by H(2)S. The sequence is that of Thiazole synthase from Chlorobium limicola (strain DSM 245 / NBRC 103803 / 6330).